The primary structure comprises 370 residues: Queuine tRNA-ribosyltransferase (370 aa).

Aspartate 89 acts as the Proton acceptor in catalysis. Residues 89 to 93 (DSGGF), aspartate 143, glutamine 187, and glycine 214 each bind substrate. Positions 245–251 (GVGKPEN) are RNA binding. Aspartate 264 acts as the Nucleophile in catalysis. The segment at 269–273 (TRNAR) is RNA binding; important for wobble base 34 recognition. 4 residues coordinate Zn(2+): cysteine 302, cysteine 304, cysteine 307, and histidine 333.

This sequence belongs to the queuine tRNA-ribosyltransferase family. As to quaternary structure, homodimer. Within each dimer, one monomer is responsible for RNA recognition and catalysis, while the other monomer binds to the replacement base PreQ1. Zn(2+) serves as cofactor.

The enzyme catalyses 7-aminomethyl-7-carbaguanine + guanosine(34) in tRNA = 7-aminomethyl-7-carbaguanosine(34) in tRNA + guanine. Its pathway is tRNA modification; tRNA-queuosine biosynthesis. In terms of biological role, catalyzes the base-exchange of a guanine (G) residue with the queuine precursor 7-aminomethyl-7-deazaguanine (PreQ1) at position 34 (anticodon wobble position) in tRNAs with GU(N) anticodons (tRNA-Asp, -Asn, -His and -Tyr). Catalysis occurs through a double-displacement mechanism. The nucleophile active site attacks the C1' of nucleotide 34 to detach the guanine base from the RNA, forming a covalent enzyme-RNA intermediate. The proton acceptor active site deprotonates the incoming PreQ1, allowing a nucleophilic attack on the C1' of the ribose to form the product. After dissociation, two additional enzymatic reactions on the tRNA convert PreQ1 to queuine (Q), resulting in the hypermodified nucleoside queuosine (7-(((4,5-cis-dihydroxy-2-cyclopenten-1-yl)amino)methyl)-7-deazaguanosine). The sequence is that of Queuine tRNA-ribosyltransferase from Hamiltonella defensa subsp. Acyrthosiphon pisum (strain 5AT).